The following is a 416-amino-acid chain: Histidinol dehydrogenase (416 aa).

The NAD(+) site is built by Tyr117, Gln178, and Asn201. 3 residues coordinate substrate: Thr224, Gln246, and His249. Zn(2+) contacts are provided by Gln246 and His249. Catalysis depends on proton acceptor residues Glu314 and His315. 4 residues coordinate substrate: His315, Asp348, Glu402, and His407. Asp348 contacts Zn(2+). A Zn(2+)-binding site is contributed by His407.

It belongs to the histidinol dehydrogenase family. The cofactor is Zn(2+).

The catalysed reaction is L-histidinol + 2 NAD(+) + H2O = L-histidine + 2 NADH + 3 H(+). It functions in the pathway amino-acid biosynthesis; L-histidine biosynthesis; L-histidine from 5-phospho-alpha-D-ribose 1-diphosphate: step 9/9. Functionally, catalyzes the sequential NAD-dependent oxidations of L-histidinol to L-histidinaldehyde and then to L-histidine. The polypeptide is Histidinol dehydrogenase (Staphylococcus aureus (strain bovine RF122 / ET3-1)).